The chain runs to 1069 residues: Structural polyprotein (1069 aa).

Asp28 contacts a divalent metal cation. The interval 504–534 (THPKLVPPTEREPNSTPDGHKITGAKTKDNT) is disordered. The span at 512–534 (TEREPNSTPDGHKITGAKTKDNT) shows a compositional bias: basic and acidic residues. The region spanning 558–791 (ADLPISLLQT…AFQGWFYCGA (234 aa)) is the Peptidase S50 domain. The active-site Nucleophile is the Ser692. Residue Lys729 is part of the active site. Disordered stretches follow at residues 876 to 900 (LPHE…STRM) and 1031 to 1069 (SGAA…TTLS).

As to quaternary structure, homotrimer. A central divalent metal stabilizes the VP2 trimer. Homodimer. Interacts (via C-terminus) with VP1 in the cytoplasm. Interacts with VP2. In terms of processing, specific enzymatic cleavages yield mature proteins. The capsid assembly seems to be regulated by polyprotein processing. The protease VP4 cleaves itself off the polyprotein, thus releasing pre-VP2 and VP3 within the infected cell. During capsid assembly, the C-terminus of pre-VP2 is further processed by VP4, giving rise to VP2, the external capsid protein and three small peptides that all stay closely associated with the capsid. The N-termini of VP2 and VP3 are blocked.

It is found in the virion. The protein localises to the host cytoplasm. Capsid protein VP2 self assembles to form an icosahedral capsid with a T=13 symmetry, about 70 nm in diameter, and consisting of 260 VP2 trimers. The capsid encapsulates the genomic dsRNA. VP2 is also involved in attachment and entry into the host cell. Functionally, the precursor of VP2 plays an important role in capsid assembly. First, pre-VP2 and VP2 oligomers assemble to form a procapsid. Then, the pre-VP2 intermediates may be processed into VP2 proteins by proteolytic cleavage mediated by VP4 to obtain the mature virion. The final capsid is composed of pentamers and hexamers but VP2 has a natural tendency to assemble into all-pentameric structures. Therefore pre-VP2 may be required to allow formation of the hexameric structures. Its function is as follows. Protease VP4 is a serine protease that cleaves the polyprotein into its final products. Pre-VP2 is first partially cleaved, and may be completely processed by VP4 upon capsid maturation. In terms of biological role, capsid protein VP3 plays a key role in virion assembly by providing a scaffold for the capsid made of VP2. May self-assemble to form a T=4-like icosahedral inner-capsid composed of at least 180 trimers. Plays a role in genomic RNA packaging by recruiting VP1 into the capsid and interacting with the dsRNA genome segments to form a ribonucleoprotein complex. Additionally, the interaction of the VP3 C-terminal tail with VP1 removes the inherent structural blockade of the polymerase active site. Thus, VP3 can also function as a transcriptional activator. Structural peptide 1 is a small peptide derived from pre-VP2 C-terminus. It destabilizes and perforates cell membranes, suggesting a role during entry. Functionally, structural peptide 2 is a small peptide derived from pre-VP2 C-terminus. It is not essential for the virus viability, but viral growth is affected when missing. Its function is as follows. Structural peptide 3 is a small peptide derived from pre-VP2 C-terminus. It is not essential for the virus viability, but viral growth is affected when missing. In terms of biological role, structural peptide 4 is a small peptide derived from pre-VP2 C-terminus. It is essential for the virus viability. This chain is Structural polyprotein, found in Channa lucius (Forest snakehead).